Here is a 1039-residue protein sequence, read N- to C-terminus: Translation initiation factor IF-2 (1039 aa).

Disordered stretches follow at residues Thr39–Glu347 and Ala400–Val452. Polar residues predominate over residues Arg103–Asn125. Low complexity predominate over residues Pro157 to Lys176. Composition is skewed to basic and acidic residues over residues Ala178–Pro197 and Pro226–Lys243. Positions Ala408–Thr423 are enriched in low complexity. Basic and acidic residues predominate over residues Asn432–Lys451. Residues Arg533 to Ser706 enclose the tr-type G domain. The interval Gly542–Thr549 is G1. Gly542–Thr549 contributes to the GTP binding site. The tract at residues Gly567–His571 is G2. The interval Asp592–Gly595 is G3. Residues Asp592 to His596 and Asn646 to Asp649 contribute to the GTP site. The interval Asn646 to Asp649 is G4. The segment at Ser682–Ile684 is G5.

The protein belongs to the TRAFAC class translation factor GTPase superfamily. Classic translation factor GTPase family. IF-2 subfamily.

Its subcellular location is the cytoplasm. One of the essential components for the initiation of protein synthesis. Protects formylmethionyl-tRNA from spontaneous hydrolysis and promotes its binding to the 30S ribosomal subunits. Also involved in the hydrolysis of GTP during the formation of the 70S ribosomal complex. The protein is Translation initiation factor IF-2 of Nostoc sp. (strain PCC 7120 / SAG 25.82 / UTEX 2576).